A 453-amino-acid chain; its full sequence is Ribulose bisphosphate carboxylase large chain (453 aa).

The propeptide occupies 1–2 (MS). P3 bears the N-acetylproline mark. N6,N6,N6-trimethyllysine is present on K14. Substrate is bound by residues N123 and T173. The active-site Proton acceptor is the K175. Position 177 (K177) interacts with substrate. Positions 201, 203, and 204 each coordinate Mg(2+). An N6-carboxylysine modification is found at K201. Residue H294 is the Proton acceptor of the active site. Substrate-binding residues include R295, H327, and S379.

It belongs to the RuBisCO large chain family. Type I subfamily. In terms of assembly, heterohexadecamer of 8 large chains and 8 small chains; disulfide-linked. The disulfide link is formed within the large subunit homodimers. Mg(2+) is required as a cofactor. In terms of processing, the disulfide bond which can form in the large chain dimeric partners within the hexadecamer appears to be associated with oxidative stress and protein turnover.

Its subcellular location is the plastid. It is found in the chloroplast. The catalysed reaction is 2 (2R)-3-phosphoglycerate + 2 H(+) = D-ribulose 1,5-bisphosphate + CO2 + H2O. It carries out the reaction D-ribulose 1,5-bisphosphate + O2 = 2-phosphoglycolate + (2R)-3-phosphoglycerate + 2 H(+). Functionally, ruBisCO catalyzes two reactions: the carboxylation of D-ribulose 1,5-bisphosphate, the primary event in carbon dioxide fixation, as well as the oxidative fragmentation of the pentose substrate in the photorespiration process. Both reactions occur simultaneously and in competition at the same active site. In Galium elongatum (Great marsh bedstraw), this protein is Ribulose bisphosphate carboxylase large chain.